Here is a 284-residue protein sequence, read N- to C-terminus: Tropomyosin beta chain (284 aa).

M1 is subject to N-acetylmethionine. Residues 1-284 (MEAIKKKMQM…DNALNDITSL (284 aa)) adopt a coiled-coil conformation. 2 stretches are compositionally biased toward basic and acidic residues: residues 22-40 (AEQA…KQLE) and 51-66 (KGTE…SVKE). The disordered stretch occupies residues 22–66 (AEQAEADKKQAEDRCKQLEEEQQGLQKKLKGTEDEVEKYSESVKE).

It belongs to the tropomyosin family. As to quaternary structure, homodimer. Heterodimer of an alpha (TPM1, TPM3 or TPM4) and a beta (TPM2) chain.

The protein localises to the cytoplasm. Its subcellular location is the cytoskeleton. Functionally, binds to actin filaments in muscle and non-muscle cells. Plays a central role, in association with the troponin complex, in the calcium dependent regulation of vertebrate striated muscle contraction. Smooth muscle contraction is regulated by interaction with caldesmon. In non-muscle cells is implicated in stabilizing cytoskeleton actin filaments. The protein is Tropomyosin beta chain (TPM2) of Gallus gallus (Chicken).